Reading from the N-terminus, the 83-residue chain is CDC42 small effector protein 2 (83 aa).

Residues cysteine 10 and cysteine 11 are each lipidated (S-palmitoyl cysteine). The 14-residue stretch at 28-41 (IGEPTNFVHTAHVG) folds into the CRIB domain. Serine 42 and serine 51 each carry phosphoserine.

It belongs to the CDC42SE/SPEC family. As to quaternary structure, interacts with CDC42 (in GTP-bound form). Interacts weakly with RAC1 and not at all with RHOA.

The protein resides in the cytoplasm. Its subcellular location is the cytoskeleton. The protein localises to the cell membrane. It is found in the cell projection. It localises to the phagocytic cup. In terms of biological role, probably involved in the organization of the actin cytoskeleton by acting downstream of CDC42, inducing actin filament assembly. Alters CDC42-induced cell shape changes. In activated T-cells, may play a role in CDC42-mediated F-actin accumulation at the immunological synapse. May play a role in early contractile events in phagocytosis in macrophages. This chain is CDC42 small effector protein 2 (Cdc42se2), found in Rattus norvegicus (Rat).